The primary structure comprises 1369 residues: ATP-dependent RNA helicase DHX29 (1369 aa).

Disordered regions lie at residues 27-75 and 176-226; these read SAEA…TNDS and SQEF…KNME. A phosphoserine mark is found at Ser-71, Ser-192, and Ser-200. Over residues 189–201 the composition is skewed to polar residues; that stretch reads KFQSPQIQATISP. The span at 208–226 shows a compositional bias: basic and acidic residues; it reads KTYEEDPKSKPKKEEKNME. Coiled coils occupy residues 222–256, 283–310, and 492–519; these read EKNMEVNMKEWILRYAEQQNEEEKNENSKSLEEEE, LEKNKQGQKEAQEKIRKFQREMETLEDH, and IAKLLNKLKQQQQQQQQHSENKRENSED. A disordered region spans residues 502–526; that stretch reads QQQQQQQHSENKRENSEDPEESWEN. The Helicase ATP-binding domain maps to 582–755; the sequence is VETLKRHRVV…FTHCPILRIS (174 aa). Residue 595 to 602 coordinates ATP; that stretch reads GETGSGKS. The short motif at 702–705 is the DEAH box element; it reads DEVH. The 178-residue stretch at 849 to 1026 folds into the Helicase C-terminal domain; that stretch reads LILELLAYLD…ELCLHIMKCN (178 aa).

This sequence belongs to the DEAD box helicase family. DEAH subfamily. In terms of assembly, part of the 43S pre-initiation complex (PIC) that contains at least Met-tRNA, EIF1, EIF1A (EIF1AX or EIF1AY), EIF2S1, EIF2S2, EIF2S3, EIF3A, EIF3B, EIF3C, EIF3D, EIF3E, EIF3F, EIF3G, EIF3H, EIF3I, EIF3J, EIF3K, EIF3L, EIF3M, DHX29 and the 40S ribosomal subunit.

The protein resides in the cytoplasm. It catalyses the reaction ATP + H2O = ADP + phosphate + H(+). ATP-binding RNA helicase involved in translation initiation. Part of the 43S pre-initiation complex that is required for efficient initiation on mRNAs of higher eukaryotes with structured 5'-UTRs by promoting efficient NTPase-dependent 48S complex formation. Specifically binds to the 40S ribosome near the mRNA entrance. Does not possess a processive helicase activity. The polypeptide is ATP-dependent RNA helicase DHX29 (Homo sapiens (Human)).